Reading from the N-terminus, the 394-residue chain is Flavohemoprotein (394 aa).

A Globin domain is found at 1-136 (MISQQTIDIV…LANVFITREE (136 aa)). Heme b is bound at residue H85. Catalysis depends on charge relay system residues Y95 and E135. A reductase region spans residues 147–394 (GGWRGTREFT…YECFGPHKVL (248 aa)). Positions 150–255 (RGTREFTLIE…AAPAGDFFLD (106 aa)) constitute an FAD-binding FR-type domain. FAD is bound by residues Y188 and 204-207 (RQYS). 268-273 (GVGLTP) provides a ligand contact to NADP(+). Residue 387-390 (CFGP) participates in FAD binding.

The protein belongs to the globin family. Two-domain flavohemoproteins subfamily. It in the C-terminal section; belongs to the flavoprotein pyridine nucleotide cytochrome reductase family. Heme b is required as a cofactor. It depends on FAD as a cofactor.

The enzyme catalyses 2 nitric oxide + NADPH + 2 O2 = 2 nitrate + NADP(+) + H(+). The catalysed reaction is 2 nitric oxide + NADH + 2 O2 = 2 nitrate + NAD(+) + H(+). Functionally, is involved in NO detoxification in an aerobic process, termed nitric oxide dioxygenase (NOD) reaction that utilizes O(2) and NAD(P)H to convert NO to nitrate, which protects the bacterium from various noxious nitrogen compounds. Therefore, plays a central role in the inducible response to nitrosative stress. This Photobacterium profundum (strain SS9) protein is Flavohemoprotein.